The chain runs to 142 residues: Translation initiation factor 2 subunit beta (142 aa).

It belongs to the eIF-2-beta/eIF-5 family. As to quaternary structure, heterotrimer composed of an alpha, a beta and a gamma chain.

Functionally, eIF-2 functions in the early steps of protein synthesis by forming a ternary complex with GTP and initiator tRNA. This Staphylothermus marinus (strain ATCC 43588 / DSM 3639 / JCM 9404 / F1) protein is Translation initiation factor 2 subunit beta.